The chain runs to 372 residues: Chaperone protein DnaJ (372 aa).

The 66-residue stretch at 5 to 70 (DYYDLLEVGR…EKRAGYDRYG (66 aa)) folds into the J domain. The CR-type zinc-finger motif lies at 134–212 (GIQAPIHYVT…CGGSGRRRDE (79 aa)). Cys-147, Cys-150, Cys-164, Cys-167, Cys-186, Cys-189, Cys-200, and Cys-203 together coordinate Zn(2+). CXXCXGXG motif repeat units follow at residues 147–154 (CDTCQGTG), 164–171 (CHTCQGSG), 186–193 (CTTCYGEG), and 200–207 (CKKCGGSG).

Belongs to the DnaJ family. Homodimer. The cofactor is Zn(2+).

Its subcellular location is the cytoplasm. Its function is as follows. Participates actively in the response to hyperosmotic and heat shock by preventing the aggregation of stress-denatured proteins and by disaggregating proteins, also in an autonomous, DnaK-independent fashion. Unfolded proteins bind initially to DnaJ; upon interaction with the DnaJ-bound protein, DnaK hydrolyzes its bound ATP, resulting in the formation of a stable complex. GrpE releases ADP from DnaK; ATP binding to DnaK triggers the release of the substrate protein, thus completing the reaction cycle. Several rounds of ATP-dependent interactions between DnaJ, DnaK and GrpE are required for fully efficient folding. Also involved, together with DnaK and GrpE, in the DNA replication of plasmids through activation of initiation proteins. The protein is Chaperone protein DnaJ of Wolbachia pipientis wMel.